The following is a 358-amino-acid chain: Na(+)/H(+) exchange regulatory cofactor NHE-RF1 (358 aa).

Ser2 carries the post-translational modification N-acetylserine. Ser2 and Ser46 each carry phosphoserine. In terms of domain architecture, PDZ 1 spans 14–94; that stretch reads LCCLEKGPNG…AVRLLVVDPD (81 aa). The segment covering 114–134 has biased composition (low complexity); sequence QAGPEQAGPPAAPGEQGPAGE. Residues 114–151 are disordered; sequence QAGPEQAGPPAAPGEQGPAGENEPREVEKSHPERRELR. Over residues 135–151 the composition is skewed to basic and acidic residues; sequence NEPREVEKSHPERRELR. Positions 154-234 constitute a PDZ 2 domain; sequence LCAMKKGPNG…EAKLLVVDKE (81 aa). Positions 247–358 are disordered; that stretch reads SSEHLNGPLP…SEKKELFSNL (112 aa). Low complexity predominate over residues 272–290; it reads LAPAASESPRPALARSASS. Residues Ser279, Ser289, and Ser290 each carry the phosphoserine modification. Thr292 is modified (phosphothreonine). Phosphoserine is present on residues Ser293, Ser298, and Ser301. Residues 308-327 are compositionally biased toward low complexity; sequence TAPSSTSSSSDPILDFSISL. Residues 348 to 358 show a composition bias toward basic and acidic residues; the sequence is WSEKKELFSNL.

Homodimer, and heterodimer with NHERF2. Binds the N-termini of EZR, RDX and MSN. Binds the C-termini of PDGFRA, PDGFRB, ADRB2, NOS2 and CFTR. Binds ARHGAP17, EPI64, RACK1, OPRK1, GNAQ, CTNNB1 and PLCB3. Binds PDZK1. Interacts with CLCN3. Binds the C-terminus of PAG1. In resting T-cells, part of a PAG1-NHERF1-MSN complex which is disrupted upon TCR activation. Forms a complex with CFTR and SLC4A7. Forms a complex with SLC4A7 and ATP6V1B1. Interacts with TRPC4 (via the PDZ-binding domain). Directly interacts with HTR4. Interacts (via the PDZ 1 domain) with PODXL (via the C-terminal PDZ-binding motif DTHL); interaction is not detected in glomerular epithelium cells. Interacts (via the PDZ 1 domain) with PODXL (via the C-terminal PDZ-binding motif DTHL); the interaction take place early in the secretory pathway and is necessary for its apical membrane sorting. Interacts with SLC26A3. Interacts with MCC. Interacts with SLC34A1. Interacts (via the PDZ domains) with SLC26A6 isoform 4 and isoform 5. Interacts (via PDZ domains) with ACE2 (via PDZ-binding motif); the interaction may enhance ACE2 membrane residence. Post-translationally, phosphorylated on serine residues. As to expression, detected in ileum, duodenum and in kidney, where it is found in the glomerulus, the proximal tubule, the thick ascending limb of Henle's loop and the cortical collecting duct.

Its subcellular location is the cytoplasm. It localises to the apical cell membrane. It is found in the cell projection. The protein localises to the filopodium. The protein resides in the ruffle. Its subcellular location is the microvillus. It localises to the endomembrane system. Its function is as follows. Scaffold protein that connects plasma membrane proteins with members of the ezrin/moesin/radixin family and thereby helps to link them to the actin cytoskeleton and to regulate their surface expression. Necessary for recycling of internalized ADRB2. Was first known to play a role in the regulation of the activity and subcellular location of SLC9A3. Necessary for cAMP-mediated phosphorylation and inhibition of SLC9A3. Involved in sperm capacitation. May participate in the regulation of the chloride and bicarbonate homeostasis in spermatozoa. May enhance Wnt signaling. May participate in HTR4 targeting to microvilli. Involved in the regulation of phosphate reabsorption in the renal proximal tubules. The protein is Na(+)/H(+) exchange regulatory cofactor NHE-RF1 (NHERF1) of Oryctolagus cuniculus (Rabbit).